We begin with the raw amino-acid sequence, 354 residues long: 3-dehydroquinate synthase (354 aa).

NAD(+) contacts are provided by residues 100–104 (GATGD), 124–125 (TT), K136, K145, and 163–166 (FLAT). Zn(2+)-binding residues include E178, H242, and H256.

This sequence belongs to the sugar phosphate cyclases superfamily. Dehydroquinate synthase family. Requires Co(2+) as cofactor. Zn(2+) serves as cofactor. It depends on NAD(+) as a cofactor.

The protein resides in the cytoplasm. The catalysed reaction is 7-phospho-2-dehydro-3-deoxy-D-arabino-heptonate = 3-dehydroquinate + phosphate. Its pathway is metabolic intermediate biosynthesis; chorismate biosynthesis; chorismate from D-erythrose 4-phosphate and phosphoenolpyruvate: step 2/7. In terms of biological role, catalyzes the conversion of 3-deoxy-D-arabino-heptulosonate 7-phosphate (DAHP) to dehydroquinate (DHQ). This Staphylococcus haemolyticus (strain JCSC1435) protein is 3-dehydroquinate synthase.